The sequence spans 766 residues: Cytoplasmic polyadenylation element-binding protein 3 (766 aa).

Disordered stretches follow at residues 1–35 (MSQEEVPGEIPGDIAIEKAENTVQDDVEAKNTSET), 131–179 (VPSR…ARRL), and 216–299 (PVPI…LPPR). Polar residues-rich tracts occupy residues 233-256 (ETPTDSPAKTETSSISKSYGSDYQ) and 276-289 (STPNRGQGLSNRDN). The region spanning 310–332 (IFVGGVPWDITEAALKDSFGEFG) is the RRM domain. Positions 578–602 (KAFSGPNRRSHLSSNSPSKPASLMS) are disordered. Positions 589–602 (LSSNSPSKPASLMS) are enriched in low complexity.

Functionally, cytoplasmic polyadenylation element binding protein that binds to and regulates the translation of specific mRNAs. The protein is Cytoplasmic polyadenylation element-binding protein 3 (cpb-3) of Caenorhabditis remanei (Caenorhabditis vulgaris).